The primary structure comprises 534 residues: MQAARVDYIAPWWVVWLHSVPHVGLRLQPVNSTFSPGDESYQESLLFLGLVAAVCLGLNLIFLVAYLVCACHCRRDDAVQTKQHHSCCITWTAVVAGLICCAAVGVGFYGNSETNDGAYQLMYSLDDANHTFSGIDALVSGTTQKMKVDLEQHLARLSEIFAARGDYLQTLKFIQQMAGSVVVQLSGLPVWREVTMELTKLSDQTGYVEYYRWLSYLLLFILDLVICLIACLGLAKRSKCLLASMLCCGALSLLLSWASLAADGSAAVATSDFCVAPDTFILNVTEGQISTEVTRYYLYCSQSGSSPFQQTLTTFQRALTTMQIQVAGLLQFAVPLFSTAEEDLLAIQLLLNSSESSLHQLTAMVDCRGLHKDYLDALAGICYDGLQGLLYLGLFSFLAALAFSTMICAGPRAWKHFTTRNRDYDDIDDDDPFNPQAWRMAAHSPPRGQLHSFCSYSSGLGSQTSLQPPAQTISNAPVSEYMNQAMLFGRNPRYENVPLIGRASPPPTYSPSMRATYLSVADEHLRHYGNQFPA.

At 1–44 the chain is on the extracellular side; it reads MQAARVDYIAPWWVVWLHSVPHVGLRLQPVNSTFSPGDESYQES. An N-linked (GlcNAc...) asparagine glycan is attached at Asn31. A helical membrane pass occupies residues 45–65; that stretch reads LLFLGLVAAVCLGLNLIFLVA. Residues 66–87 are Cytoplasmic-facing; it reads YLVCACHCRRDDAVQTKQHHSC. Residues 88-108 form a helical membrane-spanning segment; the sequence is CITWTAVVAGLICCAAVGVGF. The Extracellular portion of the chain corresponds to 109–213; the sequence is YGNSETNDGA…QTGYVEYYRW (105 aa). Ca(2+) contacts are provided by Glu113 and Asp116. N-linked (GlcNAc) asparagine glycosylation occurs at Asn129. The RGD signature appears at 164–166; that stretch reads RGD. At Thr199 the chain carries Phosphothreonine. A helical transmembrane segment spans residues 214–234; sequence LSYLLLFILDLVICLIACLGL. At 235–240 the chain is on the cytoplasmic side; it reads AKRSKC. The helical transmembrane segment at 241 to 261 threads the bilayer; it reads LLASMLCCGALSLLLSWASLA. Over 262–388 the chain is Extracellular; sequence ADGSAAVATS…AGICYDGLQG (127 aa). 2 cysteine pairs are disulfide-bonded: Cys274–Cys382 and Cys300–Cys367. An N-linked (GlcNAc...) asparagine glycan is attached at Asn283. Asn352 is a glycosylation site (N-linked (GlcNAc) asparagine). A helical transmembrane segment spans residues 389–409; sequence LLYLGLFSFLAALAFSTMICA. Residues 410-534 lie on the Cytoplasmic side of the membrane; sequence GPRAWKHFTT…LRHYGNQFPA (125 aa). Ser504 bears the Phosphoserine mark. The PY-motif; mediates interaction with NEDD4L motif lies at 506–509; that stretch reads PPTY.

This sequence belongs to the tweety family. In terms of assembly, homodimer. Forms cis-homodimers in the presence of Ca(+2) and forms monomers and trans-dimers in the absence of Ca(2+). Interacts with NEDD4L. Post-translationally, N- Glycosylated. Contains high-mannose, hybrid and complex oligosaccharides. Ubiquitinated by NEDD4L, leading to its proteasomal degradation. Expressed at higher level in brain and testis and at lower levels in heart, ovary, spleen and peripheral blood leukocytes. Up-regulated in 13 of 16 renal cell carcinoma samples examined. Up-regulated in colon carcinoma.

Its subcellular location is the cell membrane. The catalysed reaction is chloride(in) = chloride(out). It carries out the reaction L-glutamate(out) = L-glutamate(in). Its function is as follows. Calcium-independent, swelling-dependent volume-regulated anion channel (VRAC-swell) which plays a pivotal role in the process of regulatory volume decrease (RVD) in the brain through the efflux of anions like chloride and organic osmolytes like glutamate. Probable large-conductance Ca(2+)-activated chloride channel. The polypeptide is Protein tweety homolog 2 (TTYH2) (Homo sapiens (Human)).